Consider the following 890-residue polypeptide: Kinesin-like protein KIN-7C, mitochondrial (890 aa).

Over residues Met1–Ser13 the composition is skewed to polar residues. Residues Met1–Ala66 are disordered. Residues Met1–Lys73 constitute a mitochondrion transit peptide. Low complexity predominate over residues Ser40 to Ala66. Residues Asn75–Val394 form the Kinesin motor domain. Residue Gly155–Thr162 participates in ATP binding. Residues Glu395–Leu468 are a coiled coil. Residues Asp511–Ile595 are disordered. A compositionally biased stretch (low complexity) spans Ser569–Ser579. Coiled coils occupy residues His664–Ile693 and Ala729–Arg765. Residues Thr768–Thr797 form a disordered region. Positions Asn818–Glu884 form a coiled coil.

It belongs to the TRAFAC class myosin-kinesin ATPase superfamily. Kinesin family. KIN-7 subfamily.

The protein localises to the mitochondrion. This is Kinesin-like protein KIN-7C, mitochondrial from Arabidopsis thaliana (Mouse-ear cress).